A 263-amino-acid polypeptide reads, in one-letter code: Proteasome subunit beta type-5 (263 aa).

Positions 1–59 are cleaved as a propeptide — removed in mature form; it reads MALASVLERPLSVNRRGFFGLGGRADLLDLGPGSPSDGLSLAAPSWGVPEEPRIEILHG. The Nucleophile role is filled by Thr-60. Ala-108 is a binding site for bortezomib.

The protein belongs to the peptidase T1B family. The 26S proteasome consists of a 20S proteasome core and two 19S regulatory subunits. The 20S proteasome core is a barrel-shaped complex made of 28 subunits that are arranged in four stacked rings. The two outer rings are each formed by seven alpha subunits, and the two inner rings are formed by seven beta subunits. The proteolytic activity is exerted by three beta-subunits PSMB5, PSMB6 and PSMB7. Directly interacts with POMP. Interacts with ABCB1 and TAP1.

The protein localises to the cytoplasm. Its subcellular location is the nucleus. The enzyme catalyses Cleavage of peptide bonds with very broad specificity.. Functionally, component of the 20S core proteasome complex involved in the proteolytic degradation of most intracellular proteins. This complex plays numerous essential roles within the cell by associating with different regulatory particles. Associated with two 19S regulatory particles, forms the 26S proteasome and thus participates in the ATP-dependent degradation of ubiquitinated proteins. The 26S proteasome plays a key role in the maintenance of protein homeostasis by removing misfolded or damaged proteins that could impair cellular functions, and by removing proteins whose functions are no longer required. Associated with the PA200 or PA28, the 20S proteasome mediates ubiquitin-independent protein degradation. This type of proteolysis is required in several pathways including spermatogenesis (20S-PA200 complex) or generation of a subset of MHC class I-presented antigenic peptides (20S-PA28 complex). Within the 20S core complex, PSMB5 displays a chymotrypsin-like activity. The polypeptide is Proteasome subunit beta type-5 (Bos taurus (Bovine)).